Here is a 933-residue protein sequence, read N- to C-terminus: Progesterone receptor (933 aa).

The segment at 1 to 164 (MTELKAKGPR…PATQGVLSPL (164 aa)) is AF3; mediates transcriptional activation. The disordered stretch occupies residues 1 to 256 (MTELKAKGPR…AAAGGGAAAV (256 aa)). The modulating, Pro-Rich stretch occupies residues 1 to 566 (MTELKAKGPR…YSFESLPQKI (566 aa)). S20 bears the Phosphoserine mark. The LXXL motif 1 signature appears at 55–59 (LDGLL). A Phosphoserine modification is found at S81. The LXXL motif 2 motif lies at 115-119 (LETLL). Residues S130 and S162 each carry the phosphoserine modification. The mediates transcriptional transrepression stretch occupies residues 165-305 (MSRSGGKAGD…LATTVMDFIH (141 aa)). The short motif at 183–187 (KVLPR) is the Nuclear localization signal element. S190 and S213 each carry phosphoserine. Positions 220 to 231 (EVEEEDGSESEE) are enriched in acidic residues. The span at 232-246 (SAGPLLKGKPRALGG) shows a compositional bias: low complexity. The residue at position 294 (S294) is a Phosphoserine; by MAPK1. The interval 331–378 (GGAGAASAFAPPRSSPSASSTPVAVGDFPDCAYPPDAEPKDDAYPLYS) is disordered. Positions 335–350 (AASAFAPPRSSPSASS) are enriched in low complexity. A Phosphoserine; by MAPK modification is found at S345. K388 participates in a covalent cross-link: Glycyl lysine isopeptide (Lys-Gly) (interchain with G-Cter in SUMO); alternate. A Glycyl lysine isopeptide (Lys-Gly) (interchain with G-Cter in ubiquitin); alternate cross-link involves residue K388. S400 bears the Phosphoserine; by CDK2 mark. A disordered region spans residues 415–452 (PDFPLGPPPPLPPRAPPSRPGEAAVTAAPASASVSSAS). Residues 418-433 (PLGPPPPLPPRAPPSR) are compositionally biased toward pro residues. The segment covering 434-452 (PGEAAVTAAPASASVSSAS) has biased composition (low complexity). The segment at 456 to 546 (STLECILYKA…VYPPYLNYLR (91 aa)) is AF1; mediates transcriptional activation. A Glycyl lysine isopeptide (Lys-Gly) (interchain with G-Cter in SUMO) cross-link involves residue K531. 2 consecutive NR C4-type zinc fingers follow at residues 567–587 (CLICGDEASGCHYGVLTCGSC) and 603–627 (CAGRNDCIVDKIRRKNCPACRLRKC). Residues 567–639 (CLICGDEASG…AGMVLGGRKF (73 aa)) constitute a DNA-binding region (nuclear receptor). Residue S676 is modified to Phosphoserine. Residues 679–913 (QDIQLIPPLI…EFPEMMSEVI (235 aa)) form the NR LBD domain. Residues 687–933 (LINLLMSIEP…MVKPLLFHKK (247 aa)) form an AF2; mediates transcriptional activation region. Progesterone is bound at residue R766.

It belongs to the nuclear hormone receptor family. Interacts with SMARD1 and UNC45A. Interacts with CUEDC2; the interaction promotes ubiquitination, decreases sumoylation, and represses transcriptional activity. Interacts with PIAS3; the interaction promotes sumoylation of PR in a hormone-dependent manner, inhibits DNA-binding, and alters nuclear export. Interacts with SP1; the interaction requires ligand-induced phosphorylation on Ser-345 by ERK1/2-MAPK. Interacts with PRMT2. Interacts with NCOA2 and NCOA1. Interacts with KLF9. Interacts with GTF2B. In terms of processing, phosphorylated on multiple serine sites. Several of these sites are hormone-dependent. Phosphorylation on Ser-294 is highly hormone-dependent and modulates ubiquitination and sumoylation on Lys-388. Phosphorylation on Ser-102 and Ser-345 also requires induction by hormone. Basal phosphorylation on Ser-81, Ser-162, Ser-190 and Ser-400 is increased in response to progesterone and can be phosphorylated in vitro by the CDK2-A1 complex. Increased levels of phosphorylation on Ser-400 also in the presence of EGF, heregulin, IGF, PMA and FBS. Phosphorylation at this site by CDK2 is ligand-independent, and increases nuclear translocation and transcriptional activity. Phosphorylation at Ser-162 and Ser-294, but not at Ser-190, is impaired during the G(2)/M phase of the cell cycle. Phosphorylation on Ser-345 by ERK1/2 MAPK is required for interaction with SP1. Sumoylation is hormone-dependent and represses transcriptional activity. Sumoylation on all three sites is enhanced by PIAS3. Desumoylated by SENP1. Sumoylation on Lys-388, the main site of sumoylation, is repressed by ubiquitination on the same site, and modulated by phosphorylation at Ser-294. Post-translationally, ubiquitination is hormone-dependent and represses sumoylation on the same site. Promoted by MAPK-mediated phosphorylation on Ser-294. Ubiquitinated by UBR5, leading to its degradation: UBR5 specifically recognizes and binds ligand-bound PGR when it is not associated with coactivators (NCOAs). In presence of NCOAs, the UBR5-degron is not accessible, preventing its ubiquitination and degradation. In terms of processing, palmitoylated by ZDHHC7 and ZDHHC21. Palmitoylation is required for plasma membrane targeting and for rapid intracellular signaling via ERK and AKT kinases and cAMP generation.

It is found in the nucleus. The protein resides in the cytoplasm. Functionally, the steroid hormones and their receptors are involved in the regulation of eukaryotic gene expression and affect cellular proliferation and differentiation in target tissues. Transcriptional activator of several progesteron-dependent promoters in a variety of cell types. Involved in activation of SRC-dependent MAPK signaling on hormone stimulation. The polypeptide is Progesterone receptor (PGR) (Gorilla gorilla gorilla (Western lowland gorilla)).